Consider the following 83-residue polypeptide: Transmembrane protein EP84R (83 aa).

A run of 2 helical transmembrane segments spans residues 31-51 (IIGV…IIIL) and 59-79 (TGSI…FLIY).

This sequence belongs to the asfivirus EP84R family.

The protein localises to the virion membrane. The chain is Transmembrane protein EP84R from Ornithodoros (relapsing fever ticks).